Consider the following 446-residue polypeptide: Vacuolar cation/proton exchanger 4 (446 aa).

The span at 1–16 shows a compositional bias: low complexity; it reads MSSISTESSSNLSLLE. A disordered region spans residues 1–33; it reads MSSISTESSSNLSLLENGGGGSDKPTAETSRRV. Over 1-69 the chain is Cytoplasmic; that stretch reads MSSISTESSS…MRRILTNLQE (69 aa). A helical membrane pass occupies residues 70–90; it reads VLLGTKLFILFPAVPLAVVAH. Residues 91 to 96 are Extracellular-facing; it reads RYDCPR. Residues 97–117 traverse the membrane as a helical segment; it reads AWVFALSLLGLTPLAERISFL. The Cytoplasmic segment spans residues 118–128; the sequence is TEQIAFHTGPT. Residues 129–149 traverse the membrane as a helical segment; that stretch reads VGGLMNATCGNATEMIIAILA. The tract at residues 138–173 is cation selection; that stretch reads GNATEMIIAILAVGQRKMRIVKLSLLGSILSNLLFV. Topologically, residues 150-162 are extracellular; that stretch reads VGQRKMRIVKLSL. The helical transmembrane segment at 163–183 threads the bilayer; that stretch reads LGSILSNLLFVLGTSLFLGGI. At 184–196 the chain is on the cytoplasmic side; it reads SNLRKHQSFDPRQ. The chain crosses the membrane as a helical span at residues 197–217; sequence GDMNSMLLYLALLCQTLPMIM. Over 218–238 the chain is Extracellular; the sequence is RFTMEAEEYDGSDVVVLSRAS. A helical membrane pass occupies residues 239-259; the sequence is SFVMLIAYLAFLIFHLFSSHL. The Cytoplasmic portion of the chain corresponds to 260-285; sequence SPPPPPLPQREDVHDDDVSDKEEEGA. Residues 286–306 traverse the membrane as a helical segment; that stretch reads VIGMWSAIFWLIIMTLLVALL. Residues 307 to 319 are Extracellular-facing; sequence SDYLVSTIQDAAD. A helical transmembrane segment spans residues 320 to 340; sequence SWGLSVGFIGIILLPIVGNAA. Residues 337–372 are cation selection; sequence GNAAEHAGAVIFAFRNKLDITLGIALGSATQIALFV. Residues 341-359 lie on the Cytoplasmic side of the membrane; it reads EHAGAVIFAFRNKLDITLG. A helical transmembrane segment spans residues 360–380; the sequence is IALGSATQIALFVVPVTVLVA. At 381-388 the chain is on the extracellular side; sequence WTMGIEMD. The helical transmembrane segment at 389 to 409 threads the bilayer; sequence LNFNLLETACFALSILVTSLV. Topologically, residues 410–416 are cytoplasmic; that stretch reads LQDGTSN. The helical transmembrane segment at 417 to 437 threads the bilayer; the sequence is YMKGLVLLLCYVVIAACFFVS. At 438–446 the chain is on the extracellular side; sequence NSPSSKLLF.

It belongs to the Ca(2+):cation antiporter (CaCA) (TC 2.A.19) family. Cation/proton exchanger (CAX) subfamily. In terms of tissue distribution, expressed at low levels in all tissues.

The protein resides in the vacuole membrane. Vacuolar cation/proton exchanger (CAX). Translocates Ca(2+) and other metal ions into vacuoles using the proton gradient formed by H(+)-ATPase and H(+)-pyrophosphatase. Cation selectivity transport in tobacco root tonoplast vesicles is Cd(2+)&gt;Zn(2+)&gt;&gt;Ca(2+)&gt;&gt;&gt;Mn(2+). The chain is Vacuolar cation/proton exchanger 4 (CAX4) from Arabidopsis thaliana (Mouse-ear cress).